Reading from the N-terminus, the 75-residue chain is Phytosulfokines (75 aa).

A signal peptide spans 1–22; sequence MSSKAITLLLIALLFSLSLAQA. Residues 23–66 constitute a propeptide that is removed on maturation; that stretch reads ARPLQPADSTKSVHVIPEKVHDEACEGVGEEECLMRRTLTAHVD. Tyr67 and Tyr69 each carry sulfotyrosine. A propeptide spanning residues 72–75 is cleaved from the precursor; it reads DHNP.

It belongs to the phytosulfokine family. Post-translationally, sulfation is important for activity and for the binding to a putative membrane receptor. Deletion of the sulfate groups of Tyr-67 and Tyr-69 resulted in compounds with respectively 0.6% and 4% of the activity. In terms of processing, PSK-alpha is produced by endopeptidase digestion. PSK-beta is produced from PSK-alpha by exopeptidase digestion.

Its subcellular location is the secreted. Functionally, promotes plant cell differentiation, organogenesis and somatic embryogenesis as well as cell proliferation. This chain is Phytosulfokines (PSK), found in Asparagus officinalis (Garden asparagus).